A 390-amino-acid polypeptide reads, in one-letter code: Elongation factor Ts, mitochondrial (390 aa).

Belongs to the EF-Ts family.

The protein resides in the mitochondrion. Functionally, associates with the EF-Tu.GDP complex and induces the exchange of GDP to GTP. It remains bound to the aminoacyl-tRNA.EF-Tu.GTP complex up to the GTP hydrolysis stage on the ribosome. The chain is Elongation factor Ts, mitochondrial from Plasmodium falciparum (isolate 3D7).